We begin with the raw amino-acid sequence, 425 residues long: Kynurenine/alpha-aminoadipate aminotransferase, mitochondrial (425 aa).

The transit peptide at 1-29 (MNYARFITATSAARKPSTIRVMTEILSKA) directs the protein to the mitochondrion. Arg-20 provides a ligand contact to substrate. At Lys-69 the chain carries N6-acetyllysine. Substrate contacts are provided by Tyr-74 and Tyr-142. Residues 178 to 208 (WKPEDSKNPKKNSPKFLYTVPNGNNPSGNSL) form a disordered region. Lys-179 carries the post-translational modification N6-acetyllysine. Residues 198 to 208 (PNGNNPSGNSL) are compositionally biased toward polar residues. Asn-202 provides a ligand contact to substrate. Residue Lys-263 is modified to N6-(pyridoxal phosphate)lysine; alternate. N6-acetyllysine; alternate is present on residues Lys-263 and Lys-339. N6-succinyllysine; alternate occurs at positions 263 and 339. Arg-399 contributes to the substrate binding site. Residue Lys-422 is modified to N6-acetyllysine.

The protein belongs to the class-I pyridoxal-phosphate-dependent aminotransferase family. Homodimer. Pyridoxal 5'-phosphate serves as cofactor.

It is found in the mitochondrion. The catalysed reaction is L-kynurenine + 2-oxoglutarate = kynurenate + L-glutamate + H2O. The enzyme catalyses L-2-aminoadipate + 2-oxoglutarate = 2-oxoadipate + L-glutamate. It catalyses the reaction glycine + 2-oxoglutarate = glyoxylate + L-glutamate. It carries out the reaction L-kynurenine + glyoxylate = kynurenate + glycine + H2O. The catalysed reaction is 3-hydroxy-L-kynurenine + glyoxylate = xanthurenate + glycine + H2O. The enzyme catalyses 2-oxohexanoate + L-kynurenine = L-2-aminohexanoate + kynurenate + H2O. It catalyses the reaction 3-phenylpyruvate + L-kynurenine = kynurenate + L-phenylalanine + H2O. It carries out the reaction 4-methylsulfanyl-2-oxobutanoate + L-kynurenine = kynurenate + L-methionine + H2O. The catalysed reaction is 2-oxo-3-sulfanylpropanoate + L-kynurenine = kynurenate + L-cysteine + H2O. The enzyme catalyses indole-3-pyruvate + L-kynurenine = kynurenate + L-tryptophan + H2O. It catalyses the reaction 2-oxopentanoate + L-kynurenine = L-2-aminopentanoate + kynurenate + H2O. It carries out the reaction 4-methyl-2-oxopentanoate + L-kynurenine = kynurenate + L-leucine + H2O. The catalysed reaction is glyoxylate + L-methionine = 4-methylsulfanyl-2-oxobutanoate + glycine. The enzyme catalyses L-2-aminoadipate + glyoxylate = 2-oxoadipate + glycine. It catalyses the reaction L-tyrosine + glyoxylate = 3-(4-hydroxyphenyl)pyruvate + glycine. It carries out the reaction glyoxylate + L-phenylalanine = 3-phenylpyruvate + glycine. The catalysed reaction is L-tryptophan + glyoxylate = indole-3-pyruvate + glycine. The enzyme catalyses L-leucine + glyoxylate = 4-methyl-2-oxopentanoate + glycine. It catalyses the reaction 2-oxobutanoate + L-kynurenine = (2S)-2-aminobutanoate + kynurenate + H2O. It carries out the reaction 2-oxoadipate + L-kynurenine = L-2-aminoadipate + kynurenate + H2O. Its pathway is amino-acid degradation; L-lysine degradation via saccharopine pathway; glutaryl-CoA from L-lysine: step 4/6. In terms of biological role, transaminase with broad substrate specificity. Has transaminase activity towards aminoadipate, kynurenine, methionine and glutamate. Shows activity also towards tryptophan, aspartate and hydroxykynurenine. Accepts a variety of oxo-acids as amino-group acceptors, with a preference for 2-oxoglutarate, 2-oxocaproic acid, phenylpyruvate and alpha-oxo-gamma-methiol butyric acid. Can also use glyoxylate as amino-group acceptor (in vitro). This is Kynurenine/alpha-aminoadipate aminotransferase, mitochondrial from Bos taurus (Bovine).